A 115-amino-acid polypeptide reads, in one-letter code: Large ribosomal subunit protein bL20c (115 aa).

The protein belongs to the bacterial ribosomal protein bL20 family.

The protein resides in the plastid. It localises to the chloroplast. Functionally, binds directly to 23S ribosomal RNA and is necessary for the in vitro assembly process of the 50S ribosomal subunit. It is not involved in the protein synthesizing functions of that subunit. The protein is Large ribosomal subunit protein bL20c of Gnetum parvifolium (Small-leaved jointfir).